Here is a 417-residue protein sequence, read N- to C-terminus: Serine hydroxymethyltransferase (417 aa).

Residues L121 and 125–127 each bind (6S)-5,6,7,8-tetrahydrofolate; that span reads GHL. K229 bears the N6-(pyridoxal phosphate)lysine mark. 355-357 provides a ligand contact to (6S)-5,6,7,8-tetrahydrofolate; the sequence is SPF.

Belongs to the SHMT family. Homodimer. It depends on pyridoxal 5'-phosphate as a cofactor.

It localises to the cytoplasm. It carries out the reaction (6R)-5,10-methylene-5,6,7,8-tetrahydrofolate + glycine + H2O = (6S)-5,6,7,8-tetrahydrofolate + L-serine. It participates in one-carbon metabolism; tetrahydrofolate interconversion. The protein operates within amino-acid biosynthesis; glycine biosynthesis; glycine from L-serine: step 1/1. Its function is as follows. Catalyzes the reversible interconversion of serine and glycine with tetrahydrofolate (THF) serving as the one-carbon carrier. This reaction serves as the major source of one-carbon groups required for the biosynthesis of purines, thymidylate, methionine, and other important biomolecules. Also exhibits THF-independent aldolase activity toward beta-hydroxyamino acids, producing glycine and aldehydes, via a retro-aldol mechanism. The polypeptide is Serine hydroxymethyltransferase (Shewanella baltica (strain OS195)).